Consider the following 224-residue polypeptide: UPF0173 metal-dependent hydrolase EF_1371 (224 aa).

The protein belongs to the UPF0173 family.

This chain is UPF0173 metal-dependent hydrolase EF_1371, found in Enterococcus faecalis (strain ATCC 700802 / V583).